A 318-amino-acid polypeptide reads, in one-letter code: Vomeronasal type-1 receptor A11 (318 aa).

The Extracellular portion of the chain corresponds to 1–32; sequence MSEILFFSPQPLFSHMMNKNSRLHTHSNIKNT. Residues 33 to 53 traverse the membrane as a helical segment; the sequence is FFSEIGIGISGNSFLLLFHIL. At 54-65 the chain is on the cytoplasmic side; it reads KFIRGHRPRLTD. A helical transmembrane segment spans residues 66–86; sequence LPIGLLSLIHLLMLLLMAFIA. At 87–101 the chain is on the extracellular side; sequence TDIFISRRGWDGIIC. Cys101 and Cys188 are oxidised to a cystine. The chain crosses the membrane as a helical span at residues 102 to 118; it reads KFLVYLYGVLRGLSLCT. Residues 119 to 147 lie on the Cytoplasmic side of the membrane; it reads TSMLSVLQAIILSPRSSCLAKLKHKSPHH. The chain crosses the membrane as a helical span at residues 148–168; that stretch reads ISCAIIFLSVLYMLISSHILL. The Extracellular portion of the chain corresponds to 169 to 206; sequence SITATPNLTMNDFLYVSQSCSLLPLSYLVQSMYSTLLA. N-linked (GlcNAc...) asparagine glycosylation is present at Asn175. The chain crosses the membrane as a helical span at residues 207–227; it reads LREVFLISLMVLSTLYMVVLL. Topologically, residues 228–254 are cytoplasmic; sequence CRHRKQAQHLQGTSLSPKASAEQRATQ. A helical membrane pass occupies residues 255-275; that stretch reads TILMLMTFFVLMSIFDSIVSC. Residues 276–285 lie on the Extracellular side of the membrane; that stretch reads SRTMFLDDPT. The helical transmembrane segment at 286-306 threads the bilayer; that stretch reads SYSIHIFVMHIYATVSPFVFM. Residues 307–318 are Cytoplasmic-facing; sequence STEKHIVNILRG.

The protein belongs to the G-protein coupled receptor 1 family.

Its subcellular location is the cell membrane. Putative pheromone receptor implicated in the regulation of social and reproductive behavior. This Mus musculus (Mouse) protein is Vomeronasal type-1 receptor A11.